Reading from the N-terminus, the 301-residue chain is WD repeat-containing protein SL1-17 (301 aa).

WD repeat units follow at residues 11 to 54 (AHKE…LKCL), 59 to 98 (GHRL…LTKT), 101 to 140 (GDPA…KEGS), 143 to 182 (LEGK…VQFL), 184 to 223 (GHAT…LVIP), 227 to 266 (GHKG…EKHC), and 269 to 300 (THED…IYQC).

The polypeptide is WD repeat-containing protein SL1-17 (Schistosoma mansoni (Blood fluke)).